Here is a 181-residue protein sequence, read N- to C-terminus: NAD(P)H-quinone oxidoreductase subunit I, chloroplastic (181 aa).

4Fe-4S ferredoxin-type domains lie at glycine 55–glutamate 84 and lysine 95–glutamate 124. 8 residues coordinate [4Fe-4S] cluster: cysteine 64, cysteine 67, cysteine 70, cysteine 74, cysteine 104, cysteine 107, cysteine 110, and cysteine 114.

Belongs to the complex I 23 kDa subunit family. As to quaternary structure, NDH is composed of at least 16 different subunits, 5 of which are encoded in the nucleus. [4Fe-4S] cluster is required as a cofactor.

The protein resides in the plastid. It is found in the chloroplast thylakoid membrane. It carries out the reaction a plastoquinone + NADH + (n+1) H(+)(in) = a plastoquinol + NAD(+) + n H(+)(out). The enzyme catalyses a plastoquinone + NADPH + (n+1) H(+)(in) = a plastoquinol + NADP(+) + n H(+)(out). Functionally, NDH shuttles electrons from NAD(P)H:plastoquinone, via FMN and iron-sulfur (Fe-S) centers, to quinones in the photosynthetic chain and possibly in a chloroplast respiratory chain. The immediate electron acceptor for the enzyme in this species is believed to be plastoquinone. Couples the redox reaction to proton translocation, and thus conserves the redox energy in a proton gradient. The sequence is that of NAD(P)H-quinone oxidoreductase subunit I, chloroplastic from Physcomitrium patens (Spreading-leaved earth moss).